Here is a 174-residue protein sequence, read N- to C-terminus: N5-carboxyaminoimidazole ribonucleotide mutase (174 aa).

Residues S16, D19, and R46 each coordinate substrate.

The protein belongs to the AIR carboxylase family. Class I subfamily.

The enzyme catalyses 5-carboxyamino-1-(5-phospho-D-ribosyl)imidazole + H(+) = 5-amino-1-(5-phospho-D-ribosyl)imidazole-4-carboxylate. Its pathway is purine metabolism; IMP biosynthesis via de novo pathway; 5-amino-1-(5-phospho-D-ribosyl)imidazole-4-carboxylate from 5-amino-1-(5-phospho-D-ribosyl)imidazole (N5-CAIR route): step 2/2. Its function is as follows. Catalyzes the conversion of N5-carboxyaminoimidazole ribonucleotide (N5-CAIR) to 4-carboxy-5-aminoimidazole ribonucleotide (CAIR). In Mycobacterium tuberculosis (strain CDC 1551 / Oshkosh), this protein is N5-carboxyaminoimidazole ribonucleotide mutase.